The following is a 350-amino-acid chain: Small ribosomal subunit biogenesis GTPase RsgA (350 aa).

Over residues methionine 1–asparagine 17 the composition is skewed to polar residues. A disordered region spans residues methionine 1 to aspartate 33. One can recognise a CP-type G domain in the interval threonine 104–phenylalanine 273. Residues asparagine 160 to aspartate 163 and glycine 214 to serine 222 each bind GTP. Cysteine 297, cysteine 302, histidine 304, and cysteine 310 together coordinate Zn(2+).

It belongs to the TRAFAC class YlqF/YawG GTPase family. RsgA subfamily. As to quaternary structure, monomer. Associates with 30S ribosomal subunit, binds 16S rRNA. Zn(2+) serves as cofactor.

The protein resides in the cytoplasm. Its function is as follows. One of several proteins that assist in the late maturation steps of the functional core of the 30S ribosomal subunit. Helps release RbfA from mature subunits. May play a role in the assembly of ribosomal proteins into the subunit. Circularly permuted GTPase that catalyzes slow GTP hydrolysis, GTPase activity is stimulated by the 30S ribosomal subunit. The sequence is that of Small ribosomal subunit biogenesis GTPase RsgA from Shigella flexneri.